The following is a 956-amino-acid chain: Kinesin heavy chain isoform 5C (956 aa).

A Kinesin motor domain is found at 8–327; the sequence is SIKVMCRFRP…LMFGQRAKTI (320 aa). Residues glutamine 87, serine 89, serine 90, glycine 91, lysine 92, threonine 93, histidine 94, and lysine 99 each contribute to the ATP site. The microtubule-binding stretch occupies residues 174 to 315; it reads VSSPEEVMDV…PSVFNEAETK (142 aa). At threonine 403 the chain carries Phosphothreonine. A coiled-coil region spans residues 406 to 923; it reads VDGISAEKEK…RRAHSAQIAK (518 aa). Residues 859 to 956 form a globular region; sequence CELPKLEKRL…GSSNSTHYQK (98 aa). Residues 910 to 956 are disordered; that stretch reads KNMARRAHSAQIAKPIRPGHYPASSPTAVHAVRGGGGGSSNSTHYQK.

This sequence belongs to the TRAFAC class myosin-kinesin ATPase superfamily. Kinesin family. Kinesin subfamily. Oligomer composed of two heavy chains and two light chains. Interacts with GRIP1. Interacts with KLC3 and TRAK1. Interacts with ZFYVE27.

Its subcellular location is the cytoplasm. It localises to the cytoskeleton. The protein resides in the cell projection. It is found in the dendrite. The catalysed reaction is ATP + H2O = ADP + phosphate + H(+). In terms of biological role, microtubule-associated force-producing protein that may play a role in organelle transport. Has ATPase activity. Involved in synaptic transmission. Mediates dendritic trafficking of mRNAs. Required for anterograde axonal transportation of MAPK8IP3/JIP3 which is essential for MAPK8IP3/JIP3 function in axon elongation. The chain is Kinesin heavy chain isoform 5C (Kif5c) from Mus musculus (Mouse).